Here is a 589-residue protein sequence, read N- to C-terminus: TAF5-like RNA polymerase II p300/CBP-associated factor-associated factor 65 kDa subunit 5L (589 aa).

WD repeat units lie at residues 266–305 (NTEQ…LKSE), 340–379 (GHCG…NTVL), 382–421 (GHAY…PLRI), 424–463 (GHLA…SVRL), 466–505 (GHRG…LFKE), and 508–547 (GHTD…CNTP).

It belongs to the WD repeat TAF5 family. In terms of assembly, the PCAF complex is composed of a number of TBP-associated factors (TAFS), such as TAF5, TAF5L, TAF6, TAF6L, TAF9, TAF10 and TAF12, PCAF, and also PCAF-associated factors (PAFs), such as TADA2L/ADA2, TADA3L/ADA3 and SPT3. Component of the STAGA transcription coactivator-HAT complex, at least composed of SUPT3H, GCN5L2, TAF5L, TAF6L, SUPT7L, TADA3L, TAD1L, TAF10, TAF12, TRRAP and TAF9.

Its subcellular location is the nucleus. In terms of biological role, functions as a component of the PCAF complex. The PCAF complex is capable of efficiently acetylating histones in a nucleosomal context. The PCAF complex could be considered as the human version of the yeast SAGA complex. With TAF6L, acts as an epigenetic regulator essential for somatic reprogramming. Regulates target genes through H3K9ac deposition and MYC recruitment which trigger MYC regulatory network to orchestrate gene expression programs to control embryonic stem cell state. The chain is TAF5-like RNA polymerase II p300/CBP-associated factor-associated factor 65 kDa subunit 5L from Mus musculus (Mouse).